Reading from the N-terminus, the 150-residue chain is Large ribosomal subunit protein uL13 (150 aa).

The segment at 129–150 (AEHPHAAQQPKPLQLDPAATAQ) is disordered.

The protein belongs to the universal ribosomal protein uL13 family. As to quaternary structure, part of the 50S ribosomal subunit.

This protein is one of the early assembly proteins of the 50S ribosomal subunit, although it is not seen to bind rRNA by itself. It is important during the early stages of 50S assembly. In Synechococcus sp. (strain WH7803), this protein is Large ribosomal subunit protein uL13.